Consider the following 283-residue polypeptide: Pantothenate synthetase (283 aa).

ATP is bound at residue 30 to 37; sequence MGYFHEGH. The Proton donor role is filled by His37. (R)-pantoate is bound at residue Gln61. Gln61 serves as a coordination point for beta-alanine. 147-150 contributes to the ATP binding site; that stretch reads GEKD. Gln153 contributes to the (R)-pantoate binding site. Residues Val176 and 184–187 contribute to the ATP site; that span reads MSSR.

It belongs to the pantothenate synthetase family. As to quaternary structure, homodimer.

It is found in the cytoplasm. It carries out the reaction (R)-pantoate + beta-alanine + ATP = (R)-pantothenate + AMP + diphosphate + H(+). Its pathway is cofactor biosynthesis; (R)-pantothenate biosynthesis; (R)-pantothenate from (R)-pantoate and beta-alanine: step 1/1. Catalyzes the condensation of pantoate with beta-alanine in an ATP-dependent reaction via a pantoyl-adenylate intermediate. This chain is Pantothenate synthetase, found in Syntrophobacter fumaroxidans (strain DSM 10017 / MPOB).